The primary structure comprises 277 residues: Probable endonuclease 4 (277 aa).

Zn(2+)-binding residues include His67, His107, Glu142, Asp176, His179, His211, Asp224, His226, and Glu256.

Belongs to the AP endonuclease 2 family. Requires Zn(2+) as cofactor.

It catalyses the reaction Endonucleolytic cleavage to 5'-phosphooligonucleotide end-products.. Its function is as follows. Endonuclease IV plays a role in DNA repair. It cleaves phosphodiester bonds at apurinic or apyrimidinic (AP) sites, generating a 3'-hydroxyl group and a 5'-terminal sugar phosphate. The protein is Probable endonuclease 4 of Clostridium botulinum (strain Alaska E43 / Type E3).